The primary structure comprises 373 residues: UDP-N-acetylglucosamine--N-acetylmuramyl-(pentapeptide) pyrophosphoryl-undecaprenol N-acetylglucosamine transferase (373 aa).

Residues 13–15 (TGG), N124, R164, S192, and Q293 contribute to the UDP-N-acetyl-alpha-D-glucosamine site.

The protein belongs to the glycosyltransferase 28 family. MurG subfamily.

The protein resides in the cell inner membrane. It catalyses the reaction di-trans,octa-cis-undecaprenyl diphospho-N-acetyl-alpha-D-muramoyl-L-alanyl-D-glutamyl-meso-2,6-diaminopimeloyl-D-alanyl-D-alanine + UDP-N-acetyl-alpha-D-glucosamine = di-trans,octa-cis-undecaprenyl diphospho-[N-acetyl-alpha-D-glucosaminyl-(1-&gt;4)]-N-acetyl-alpha-D-muramoyl-L-alanyl-D-glutamyl-meso-2,6-diaminopimeloyl-D-alanyl-D-alanine + UDP + H(+). It participates in cell wall biogenesis; peptidoglycan biosynthesis. Functionally, cell wall formation. Catalyzes the transfer of a GlcNAc subunit on undecaprenyl-pyrophosphoryl-MurNAc-pentapeptide (lipid intermediate I) to form undecaprenyl-pyrophosphoryl-MurNAc-(pentapeptide)GlcNAc (lipid intermediate II). In Allorhizobium ampelinum (strain ATCC BAA-846 / DSM 112012 / S4) (Agrobacterium vitis (strain S4)), this protein is UDP-N-acetylglucosamine--N-acetylmuramyl-(pentapeptide) pyrophosphoryl-undecaprenol N-acetylglucosamine transferase.